We begin with the raw amino-acid sequence, 260 residues long: MTTGLLQGKKGLITGIANNMSISWAIAQLAKKHGAELWFTYQSGVLEKRVKPLAKEIGCNFVSELDVTKPKSISNLFDDIKEKWGSFDFLLHGMAFADKNELKGRYVDTSLENFHNSLHISCYSLLELSRSAEALMHNGGSIVTLTYYGAEKVIPNYNVMGVAKAALEASIKYLANDMGENNIRVNAISAGPIKTLASSAIGDFSTMLKSHAATAPLKRNTTQEDVGGAAVYLFSELSKGVTGEIHYVDCGYNIMGSTKL.

Residues Gly-15, Ser-21 to Ile-22, Gln-42, Asp-66 to Val-67, and Met-94 each bind NAD(+). Ala-97 provides a ligand contact to substrate. Residues Tyr-147 and Tyr-157 each act as proton acceptor in the active site. Residues Lys-164 and Ile-193–Ala-197 each bind NAD(+).

Belongs to the short-chain dehydrogenases/reductases (SDR) family. FabI subfamily. As to quaternary structure, homotetramer.

The enzyme catalyses a 2,3-saturated acyl-[ACP] + NAD(+) = a (2E)-enoyl-[ACP] + NADH + H(+). Its pathway is lipid metabolism; fatty acid biosynthesis. Functionally, catalyzes the reduction of a carbon-carbon double bond in an enoyl moiety that is covalently linked to an acyl carrier protein (ACP). Involved in the elongation cycle of fatty acid which are used in the lipid metabolism. The protein is Enoyl-[acyl-carrier-protein] reductase [NADH] FabI (fabI) of Rickettsia conorii (strain ATCC VR-613 / Malish 7).